The primary structure comprises 124 residues: Small ribosomal subunit protein eS6 (124 aa).

Belongs to the eukaryotic ribosomal protein eS6 family.

The polypeptide is Small ribosomal subunit protein eS6 (Methanococcus maripaludis (strain C5 / ATCC BAA-1333)).